Consider the following 697-residue polypeptide: Elongation factor G (697 aa).

The tr-type G domain maps to 10–290 (THFRNIGIAA…AVVDYLPSPL (281 aa)). GTP-binding positions include 19–26 (AHIDAGKT), 89–93 (DTPGH), and 143–146 (NKMD).

This sequence belongs to the TRAFAC class translation factor GTPase superfamily. Classic translation factor GTPase family. EF-G/EF-2 subfamily.

The protein localises to the cytoplasm. Functionally, catalyzes the GTP-dependent ribosomal translocation step during translation elongation. During this step, the ribosome changes from the pre-translocational (PRE) to the post-translocational (POST) state as the newly formed A-site-bound peptidyl-tRNA and P-site-bound deacylated tRNA move to the P and E sites, respectively. Catalyzes the coordinated movement of the two tRNA molecules, the mRNA and conformational changes in the ribosome. The protein is Elongation factor G of Deinococcus deserti (strain DSM 17065 / CIP 109153 / LMG 22923 / VCD115).